The chain runs to 190 residues: uncharacterized protein (190 aa).

This is an uncharacterized protein from Acanthamoeba polyphaga mimivirus (APMV).